The sequence spans 320 residues: uncharacterized protein (320 aa).

An ATP-binding site is contributed by 46-53 (DVPGVGKT).

Belongs to the MoxR family.

This is an uncharacterized protein from Bacillus subtilis (strain 168).